The primary structure comprises 101 residues: MISLNHYLIVAALMFVIGLVGVMKRQNLIMLFFSTEILLNAANVALVAISSFYNDIGGQIFAMFIIAIAASEMAVGLGLLILWYKKRHSIEIDSLSTMRDE.

The next 3 helical transmembrane spans lie at 2-22, 29-49, and 63-83; these read ISLNHYLIVAALMFVIGLVGV, IMLFFSTEILLNAANVALVAI, and MFIIAIAASEMAVGLGLLILW.

It belongs to the complex I subunit 4L family. NDH-1 is composed of 14 different subunits. Subunits NuoA, H, J, K, L, M, N constitute the membrane sector of the complex.

The protein localises to the cell inner membrane. It carries out the reaction a quinone + NADH + 5 H(+)(in) = a quinol + NAD(+) + 4 H(+)(out). Its function is as follows. NDH-1 shuttles electrons from NADH, via FMN and iron-sulfur (Fe-S) centers, to quinones in the respiratory chain. The immediate electron acceptor for the enzyme in this species is believed to be ubiquinone. Couples the redox reaction to proton translocation (for every two electrons transferred, four hydrogen ions are translocated across the cytoplasmic membrane), and thus conserves the redox energy in a proton gradient. The chain is NADH-quinone oxidoreductase subunit K from Campylobacter hominis (strain ATCC BAA-381 / DSM 21671 / CCUG 45161 / LMG 19568 / NCTC 13146 / CH001A).